Reading from the N-terminus, the 327-residue chain is Ribose 1,5-bisphosphate isomerase (327 aa).

Substrate-binding positions include 25–28 and Arg68; that span reads RGAA. Cys133 acts as the Proton acceptor in catalysis. Asp202 functions as the Proton donor in the catalytic mechanism. Substrate contacts are provided by residues 212–213 and Lys238; that span reads NK.

It belongs to the eIF-2B alpha/beta/delta subunits family. R15P isomerase subfamily.

It catalyses the reaction alpha-D-ribose 1,5-bisphosphate = D-ribulose 1,5-bisphosphate. Its function is as follows. Isomerase involved in the non-carboxylating pentose bisphosphate pathway, a nucleoside degradation pathway present in some halophilic archaea. Catalyzes the isomerization of ribose 1,5-bisphosphate (R15P) to ribulose 1,5-bisphosphate (RuBP). The protein is Ribose 1,5-bisphosphate isomerase of Haloterrigena turkmenica (strain ATCC 51198 / DSM 5511 / JCM 9101 / NCIMB 13204 / VKM B-1734 / 4k) (Halococcus turkmenicus).